The primary structure comprises 648 residues: 5-aminolevulinate synthase, mitochondrial (648 aa).

The N-terminal 26 residues, 1-26 (MEALLQQSRAMCPFLKRSSPNTLRSL), are a transit peptide targeting the mitochondrion. The interval 69-109 (KRFTSSAAGVPGAGAGTPKPTRGSPGKRALHSTGGNGANMS) is disordered. 3 residues coordinate substrate: arginine 170, serine 283, and lysine 302. Serine 335, histidine 363, and threonine 409 together coordinate pyridoxal 5'-phosphate. Residue lysine 412 is part of the active site. An N6-(pyridoxal phosphate)lysine modification is found at lysine 412. Pyridoxal 5'-phosphate is bound by residues threonine 441 and threonine 442. Substrate is bound at residue threonine 527.

It belongs to the class-II pyridoxal-phosphate-dependent aminotransferase family. In terms of assembly, homodimer. Requires pyridoxal 5'-phosphate as cofactor.

The protein localises to the mitochondrion matrix. It catalyses the reaction succinyl-CoA + glycine + H(+) = 5-aminolevulinate + CO2 + CoA. It participates in porphyrin-containing compound metabolism; protoporphyrin-IX biosynthesis; 5-aminolevulinate from glycine: step 1/1. Its function is as follows. Catalyzes the synthesis of 5-aminolevulinate (ALA) from succinyl-CoA and glycine, the first and rate-limiting step in heme biosynthesis. In Emericella nidulans (strain FGSC A4 / ATCC 38163 / CBS 112.46 / NRRL 194 / M139) (Aspergillus nidulans), this protein is 5-aminolevulinate synthase, mitochondrial (hemA).